Here is a 536-residue protein sequence, read N- to C-terminus: Peptide chain release factor 3 (536 aa).

One can recognise a tr-type G domain in the interval 13–281 (SHRRTFAIIS…ALIDWAPAPQ (269 aa)). GTP is bound by residues 22 to 29 (SHPDAGKT), 90 to 94 (DTPGH), and 144 to 147 (NKCD).

The protein belongs to the TRAFAC class translation factor GTPase superfamily. Classic translation factor GTPase family. PrfC subfamily.

The protein resides in the cytoplasm. Its function is as follows. Increases the formation of ribosomal termination complexes and stimulates activities of RF-1 and RF-2. It binds guanine nucleotides and has strong preference for UGA stop codons. It may interact directly with the ribosome. The stimulation of RF-1 and RF-2 is significantly reduced by GTP and GDP, but not by GMP. The protein is Peptide chain release factor 3 of Chromobacterium violaceum (strain ATCC 12472 / DSM 30191 / JCM 1249 / CCUG 213 / NBRC 12614 / NCIMB 9131 / NCTC 9757 / MK).